The sequence spans 234 residues: Small ribosomal subunit protein uS3 (234 aa).

The 69-residue stretch at 39 to 107 folds into the KH type-2 domain; it reads IRKFLKKELY…EVSINIKEVK (69 aa).

This sequence belongs to the universal ribosomal protein uS3 family. As to quaternary structure, part of the 30S ribosomal subunit. Forms a tight complex with proteins S10 and S14.

Functionally, binds the lower part of the 30S subunit head. Binds mRNA in the 70S ribosome, positioning it for translation. The chain is Small ribosomal subunit protein uS3 from Helicobacter pylori (strain J99 / ATCC 700824) (Campylobacter pylori J99).